We begin with the raw amino-acid sequence, 923 residues long: Helicase POLQ-like (923 aa).

Residues 1–84 (MNRTPIRRCK…STVTPIQQKI (84 aa)) are disordered. Over residues 43-55 (STSPQSPSSSTEN) the composition is skewed to low complexity. The 172-residue stretch at 178 to 349 (DKRLLDGENC…ALRAFVYSTN (172 aa)) folds into the Helicase ATP-binding domain. 191 to 198 (LPTGAGKT) is a binding site for ATP. The DEAH box signature appears at 295-298 (DELH). Residues 392–596 (GICQLLAKLI…CVVLKLAENI (205 aa)) enclose the Helicase C-terminal domain.

Belongs to the helicase family. SKI2 subfamily.

Its subcellular location is the nucleus. The protein localises to the chromosome. It catalyses the reaction Couples ATP hydrolysis with the unwinding of duplex DNA by translocating in the 3'-5' direction.. The enzyme catalyses ATP + H2O = ADP + phosphate + H(+). Its function is as follows. Single-stranded 3'-5' DNA helicase that plays a key role in homology-driven double-strand break (DSB) repair. Involved in different DSB repair mechanisms that are guided by annealing of extensive stretches of complementary bases at break ends, such as microhomology-mediated end-joining (MMEJ), single-strand annealing (SSA) or synthesis-dependent strand annealing (SDSA). The polypeptide is Helicase POLQ-like (Caenorhabditis elegans).